The chain runs to 639 residues: Extracellular metalloproteinase 9 (639 aa).

A signal peptide spans M1 to G19. A propeptide spanning residues H20–D250 is cleaved from the precursor. N-linked (GlcNAc...) asparagine glycosylation occurs at N278. A disordered region spans residues P293–Y312. H434 is a Zn(2+) binding site. Residue E435 is part of the active site. H438 contacts Zn(2+).

Belongs to the peptidase M36 family. Zn(2+) serves as cofactor.

The protein localises to the secreted. Secreted metalloproteinase that allows assimilation of proteinaceous substrates and probably acts as a virulence factor. This chain is Extracellular metalloproteinase 9 (MEP9), found in Coccidioides posadasii (strain C735) (Valley fever fungus).